A 587-amino-acid polypeptide reads, in one-letter code: D-lactate dehydrogenase [cytochrome] 1, mitochondrial (587 aa).

An FAD-binding PCMH-type domain is found at Ser-146 to Lys-327.

The protein belongs to the FAD-binding oxidoreductase/transferase type 4 family. The cofactor is FAD.

The protein resides in the mitochondrion inner membrane. It carries out the reaction (R)-lactate + 2 Fe(III)-[cytochrome c] = 2 Fe(II)-[cytochrome c] + pyruvate + 2 H(+). Catalyzes the stereospecific oxidation of D-lactate to pyruvate. This is D-lactate dehydrogenase [cytochrome] 1, mitochondrial from Saccharomyces cerevisiae (strain ATCC 204508 / S288c) (Baker's yeast).